Reading from the N-terminus, the 398-residue chain is Enoyl-[acyl-carrier-protein] reductase [NADH] (398 aa).

Residues 48–53 (GSSTGY), 74–75 (FE), 111–112 (DA), and 139–140 (LA) each bind NAD(+). Tyr225 is a substrate binding site. The Proton donor role is filled by Tyr235. Residues Lys244 and 273 to 275 (VVT) each bind NAD(+).

Belongs to the TER reductase family. As to quaternary structure, monomer.

It carries out the reaction a 2,3-saturated acyl-[ACP] + NAD(+) = a (2E)-enoyl-[ACP] + NADH + H(+). The protein operates within lipid metabolism; fatty acid biosynthesis. In terms of biological role, involved in the final reduction of the elongation cycle of fatty acid synthesis (FAS II). Catalyzes the reduction of a carbon-carbon double bond in an enoyl moiety that is covalently linked to an acyl carrier protein (ACP). This chain is Enoyl-[acyl-carrier-protein] reductase [NADH], found in Pseudomonas aeruginosa (strain UCBPP-PA14).